Reading from the N-terminus, the 153-residue chain is UPF0756 membrane protein Bcer98_3279 (153 aa).

The next 4 membrane-spanning stretches (helical) occupy residues 8-28, 54-74, 87-107, and 117-137; these read FLFI…IVAI, LGVT…EIGF, WIAL…LQLL, and LVFG…GPLI.

Belongs to the UPF0756 family.

Its subcellular location is the cell membrane. The protein is UPF0756 membrane protein Bcer98_3279 of Bacillus cytotoxicus (strain DSM 22905 / CIP 110041 / 391-98 / NVH 391-98).